Reading from the N-terminus, the 1203-residue chain is ATP-dependent helicase/nuclease subunit A (1203 aa).

The 469-residue stretch at V4–R472 folds into the UvrD-like helicase ATP-binding domain. Residue A25–T32 coordinates ATP. The UvrD-like helicase C-terminal domain occupies V503–G785.

This sequence belongs to the helicase family. AddA subfamily. In terms of assembly, heterodimer of AddA and AddB/RexB. Mg(2+) is required as a cofactor.

The enzyme catalyses Couples ATP hydrolysis with the unwinding of duplex DNA by translocating in the 3'-5' direction.. It carries out the reaction ATP + H2O = ADP + phosphate + H(+). In terms of biological role, the heterodimer acts as both an ATP-dependent DNA helicase and an ATP-dependent, dual-direction single-stranded exonuclease. Recognizes the chi site generating a DNA molecule suitable for the initiation of homologous recombination. The AddA nuclease domain is required for chi fragment generation; this subunit has the helicase and 3' -&gt; 5' nuclease activities. The sequence is that of ATP-dependent helicase/nuclease subunit A from Lactococcus lactis subsp. cremoris (strain SK11).